Reading from the N-terminus, the 313-residue chain is Desiccation-related protein PCC13-62 (313 aa).

A signal peptide spans 1 to 26 (MAQQPTFASAALVSFFLALICSCSYA).

The chain is Desiccation-related protein PCC13-62 from Craterostigma plantagineum (Blue gem).